A 182-amino-acid polypeptide reads, in one-letter code: Acireductone dioxygenase (182 aa).

The Fe(2+) site is built by His100, His102, Glu106, and His145. 4 residues coordinate Ni(2+): His100, His102, Glu106, and His145.

The protein belongs to the acireductone dioxygenase (ARD) family. Monomer. Fe(2+) serves as cofactor. Ni(2+) is required as a cofactor.

The enzyme catalyses 1,2-dihydroxy-5-(methylsulfanyl)pent-1-en-3-one + O2 = 3-(methylsulfanyl)propanoate + CO + formate + 2 H(+). The catalysed reaction is 1,2-dihydroxy-5-(methylsulfanyl)pent-1-en-3-one + O2 = 4-methylsulfanyl-2-oxobutanoate + formate + 2 H(+). It participates in amino-acid biosynthesis; L-methionine biosynthesis via salvage pathway; L-methionine from S-methyl-5-thio-alpha-D-ribose 1-phosphate: step 5/6. Catalyzes 2 different reactions between oxygen and the acireductone 1,2-dihydroxy-3-keto-5-methylthiopentene (DHK-MTPene) depending upon the metal bound in the active site. Fe-containing acireductone dioxygenase (Fe-ARD) produces formate and 2-keto-4-methylthiobutyrate (KMTB), the alpha-ketoacid precursor of methionine in the methionine recycle pathway. Ni-containing acireductone dioxygenase (Ni-ARD) produces methylthiopropionate, carbon monoxide and formate, and does not lie on the methionine recycle pathway. The sequence is that of Acireductone dioxygenase from Nostoc sp. (strain PCC 7120 / SAG 25.82 / UTEX 2576).